The primary structure comprises 693 residues: Heat shock protein homolog SSE1 (693 aa).

The segment at 665–693 is disordered; sequence LAEKLAAQRKAESEKKESKADAEGDVELD. Residues 673–686 are compositionally biased toward basic and acidic residues; sequence RKAESEKKESKADA.

The protein belongs to the heat shock protein 70 family.

It is found in the cytoplasm. The protein is Heat shock protein homolog SSE1 (SSE1) of Lachancea kluyveri (strain ATCC 58438 / CBS 3082 / BCRC 21498 / NBRC 1685 / JCM 7257 / NCYC 543 / NRRL Y-12651) (Yeast).